A 102-amino-acid chain; its full sequence is Small ribosomal subunit protein uS10 (102 aa).

Belongs to the universal ribosomal protein uS10 family. Part of the 30S ribosomal subunit.

Functionally, involved in the binding of tRNA to the ribosomes. This is Small ribosomal subunit protein uS10 from Oceanobacillus iheyensis (strain DSM 14371 / CIP 107618 / JCM 11309 / KCTC 3954 / HTE831).